Consider the following 254-residue polypeptide: HTH-type transcriptional regulator GolR (254 aa).

An HTH deoR-type domain is found at 3 to 58 (PFERQNKIIHLLDQNNKITVPELSRILDVSISTIRNDLSALEESGMIKKVHGGAVL). Positions 20–39 (ITVPELSRILDVSISTIRND) form a DNA-binding region, H-T-H motif.

Its function is as follows. Involved in the glycerol metabolism. Repressor of the gol operon for glycerol metabolism. This Listeria innocua serovar 6a (strain ATCC BAA-680 / CLIP 11262) protein is HTH-type transcriptional regulator GolR.